Reading from the N-terminus, the 372-residue chain is Cytochrome b (372 aa).

The next 4 membrane-spanning stretches (helical) occupy residues 25 to 45, 69 to 90, 105 to 125, and 170 to 190; these read FGSMLLACLMLQIMTGFFLAI, WIMQNLHTISASLFFICIYTHI, WLSGTALLVTLMATAFFGYVL, and FFALHFILPFIIISLSSVHII. Positions 75 and 89 each coordinate heme b. Heme b is bound by residues His-174 and His-188. A ubiquinone is bound at residue His-193. 4 helical membrane-spanning segments follow: residues 218–238, 280–300, 312–332, and 339–358; these read YKDMLMITSMITLLLLILSFS, LGGTLALLLSVMILTTTPFTH, LSQILFWTLIATFITITWTAS, and FITISQTTSIFYFSFFILTP.

It belongs to the cytochrome b family. As to quaternary structure, the cytochrome bc1 complex contains 3 respiratory subunits (MT-CYB, CYC1 and UQCRFS1), 2 core proteins (UQCRC1 and UQCRC2) and probably 6 low-molecular weight proteins. It depends on heme b as a cofactor.

Its subcellular location is the mitochondrion inner membrane. Functionally, component of the ubiquinol-cytochrome c reductase complex (complex III or cytochrome b-c1 complex) that is part of the mitochondrial respiratory chain. The b-c1 complex mediates electron transfer from ubiquinol to cytochrome c. Contributes to the generation of a proton gradient across the mitochondrial membrane that is then used for ATP synthesis. This is Cytochrome b (MT-CYB) from Naja kaouthia (Monocled cobra).